The sequence spans 221 residues: Triosephosphate isomerase (221 aa).

8–10 (NLK) is a binding site for substrate. The Electrophile role is filled by His92. Residue Glu140 is the Proton acceptor of the active site. Substrate-binding positions include Ile145, Gly180, and 201 to 202 (AS).

This sequence belongs to the triosephosphate isomerase family. Homotetramer; dimer of dimers.

The protein resides in the cytoplasm. It catalyses the reaction D-glyceraldehyde 3-phosphate = dihydroxyacetone phosphate. It participates in carbohydrate biosynthesis; gluconeogenesis. Its pathway is carbohydrate degradation; glycolysis; D-glyceraldehyde 3-phosphate from glycerone phosphate: step 1/1. Functionally, involved in the gluconeogenesis. Catalyzes stereospecifically the conversion of dihydroxyacetone phosphate (DHAP) to D-glyceraldehyde-3-phosphate (G3P). This chain is Triosephosphate isomerase, found in Methanococcoides burtonii (strain DSM 6242 / NBRC 107633 / OCM 468 / ACE-M).